The primary structure comprises 218 residues: MMGCLPTKQVGRSTHSLNPREAVALAAETSFTVNEVEALYDLFRKLSNSIIKDGLIHKEEFHLALFRNKKTNLFVDRVFDLFDQKGNGVIEFDEFVRSLSVFHPDAPEEQKAGFAFKLYDLRQTGFIERHELKEMVLALLDESDLNITSDAVEMIVDRTFDQADTKGDERIDQEEWNEFVKNNPYVLRNMTLPYLKDLTMVFPSFVIHSEVSEADMVA.

4 EF-hand domains span residues 35-69, 70-105, 107-142, and 151-186; these read EVEA…FRNK, KTNL…FHPD, PEEQ…LLDE, and AVEM…NPYV.

It belongs to the calcineurin regulatory subunit family. As to quaternary structure, homodimer. Expressed at low levels in roots, shoots, culms, leaves and young spikelets.

Acts as a calcium sensor. CBL proteins interact with CIPK serine-threonine protein kinases. Binding of a CBL protein to the regulatory NAF domain of a CIPK protein lead to the activation of the kinase in a calcium-dependent manner. This is Calcineurin B-like protein 5 (CBL5) from Oryza sativa subsp. japonica (Rice).